The following is a 99-amino-acid chain: U1-theraphotoxin-Tal1a (99 aa).

The N-terminal stretch at 1 to 22 (MNTIQVIIFAVVLVLTVTVGQA) is a signal peptide. The propeptide occupies 23 to 57 (DEDSAETSLLRKLKEAEASLFGQHLEESQHSREKR). Disulfide bonds link Cys-58–Cys-73, Cys-65–Cys-78, and Cys-72–Cys-93. The residue at position 98 (Ser-98) is a Serine amide.

The protein belongs to the neurotoxin 14 (magi-1) family. 08 (Ltx-4) subfamily. As to expression, expressed by the venom gland.

The protein localises to the secreted. Insecticidal toxin that shows strong lethal effects on American cockroaches (P.americana) and common mealbeetle (T.molitor). Possibly acts by blocking ion channel currents. Also shows significant analgesic effects in mice models of pain including abdominal writhing induced by acetic acid and formalin-induced paw licking tests. In addition, exerts marked inhibition of proliferation of some human tumor cell lines including C8166, Molt-4, A-549, BIU-87, T24, and Calu-6. The chain is U1-theraphotoxin-Tal1a from Tliltocatl albopilosus (Curlyhair tarantula).